The chain runs to 480 residues: Porphobilinogen deaminase, chloroplastic (480 aa).

The transit peptide at Met1 to Ala139 directs the protein to the chloroplast. Cys395 carries the post-translational modification S-(dipyrrolylmethanemethyl)cysteine.

Belongs to the HMBS family. The cofactor is dipyrromethane.

It is found in the plastid. The protein resides in the chloroplast. The catalysed reaction is 4 porphobilinogen + H2O = hydroxymethylbilane + 4 NH4(+). Its pathway is porphyrin-containing compound metabolism; protoporphyrin-IX biosynthesis; coproporphyrinogen-III from 5-aminolevulinate: step 2/4. It participates in porphyrin-containing compound metabolism; chlorophyll biosynthesis. Functionally, tetrapolymerization of the monopyrrole PBG into the hydroxymethylbilane pre-uroporphyrinogen in several discrete steps. The protein is Porphobilinogen deaminase, chloroplastic of Euglena gracilis.